A 610-amino-acid polypeptide reads, in one-letter code: 1,8-cineol synthase, chloroplastic (610 aa).

The N-terminal 51 residues, 1-51 (MNHHLIITPIFHLQIMLPVATLKRPPPPAATCSIYSFSRGTPSLVSKARLS), are a transit peptide targeting the chloroplast. Residues Arg-322, Asp-359, Asp-363, Arg-500, and Asn-503 each coordinate (2E)-geranyl diphosphate. Mg(2+) is bound by residues Asp-359 and Asp-363. The DDXXD motif signature appears at 359–363 (DDVYD). Mg(2+) is bound by residues Asn-503, Thr-507, and Glu-511.

This sequence belongs to the terpene synthase family. Tpsb subfamily. Monomer. Mg(2+) is required as a cofactor. Mn(2+) serves as cofactor. In terms of tissue distribution, confined to buds and flowers.

It localises to the plastid. The protein localises to the chloroplast. It carries out the reaction (2E)-geranyl diphosphate + H2O = 1,8-cineole + diphosphate. It catalyses the reaction (2E)-geranyl diphosphate = limonene + diphosphate. The catalysed reaction is (2E)-geranyl diphosphate = sabinene + diphosphate. The enzyme catalyses (2E)-geranyl diphosphate = (E)-beta-ocimene + diphosphate. It carries out the reaction (2E)-geranyl diphosphate = beta-myrcene + diphosphate. It catalyses the reaction (2E)-geranyl diphosphate = alpha-pinene + diphosphate. The catalysed reaction is (2E)-geranyl diphosphate + H2O = (S)-alpha-terpineol + diphosphate. Its pathway is secondary metabolite biosynthesis; terpenoid biosynthesis. Its function is as follows. Monoterpene synthase involved in the biosynthesis of monoterpene natural products of the 'cineole cassette', volatile compounds present in floral scent. Catalyzes the conversion of (2E)-geranyl diphosphate (GPP) into 1,8-cineole and, as minor products, limonene, sabinene, (E)-beta-ocimene, beta-myrcene, alpha-pinene and alpha-terpineol. This is 1,8-cineol synthase, chloroplastic from Nicotiana suaveolens (Australian tobacco).